The sequence spans 376 residues: Glutamate 5-kinase (376 aa).

Residue lysine 15 participates in ATP binding. 3 residues coordinate substrate: serine 56, aspartate 143, and asparagine 155. Residue 175–176 (SD) coordinates ATP. Positions 281 to 358 (KGTLTIDAGA…PDVMSILGIT (78 aa)) constitute a PUA domain.

Belongs to the glutamate 5-kinase family.

The protein resides in the cytoplasm. It carries out the reaction L-glutamate + ATP = L-glutamyl 5-phosphate + ADP. It functions in the pathway amino-acid biosynthesis; L-proline biosynthesis; L-glutamate 5-semialdehyde from L-glutamate: step 1/2. Its function is as follows. Catalyzes the transfer of a phosphate group to glutamate to form L-glutamate 5-phosphate. This chain is Glutamate 5-kinase, found in Rhodopseudomonas palustris (strain BisB18).